We begin with the raw amino-acid sequence, 361 residues long: F-box protein pof7 (361 aa).

The 53-residue stretch at 105 to 157 (NESVVPNILKLPDEVLLVILENCIRDLHDLRYLSSIALTCKHFAKALRADSLY) folds into the F-box domain.

In terms of assembly, interacts with skp1.

It is found in the cytoplasm. The polypeptide is F-box protein pof7 (pof7) (Schizosaccharomyces pombe (strain 972 / ATCC 24843) (Fission yeast)).